Here is a 142-residue protein sequence, read N- to C-terminus: Large ribosomal subunit protein uL13 (142 aa).

It belongs to the universal ribosomal protein uL13 family. In terms of assembly, part of the 50S ribosomal subunit.

In terms of biological role, this protein is one of the early assembly proteins of the 50S ribosomal subunit, although it is not seen to bind rRNA by itself. It is important during the early stages of 50S assembly. This Cupriavidus necator (strain ATCC 17699 / DSM 428 / KCTC 22496 / NCIMB 10442 / H16 / Stanier 337) (Ralstonia eutropha) protein is Large ribosomal subunit protein uL13.